The following is a 195-amino-acid chain: Imidazoleglycerol-phosphate dehydratase (195 aa).

This sequence belongs to the imidazoleglycerol-phosphate dehydratase family.

It localises to the cytoplasm. The catalysed reaction is D-erythro-1-(imidazol-4-yl)glycerol 3-phosphate = 3-(imidazol-4-yl)-2-oxopropyl phosphate + H2O. Its pathway is amino-acid biosynthesis; L-histidine biosynthesis; L-histidine from 5-phospho-alpha-D-ribose 1-diphosphate: step 6/9. The protein is Imidazoleglycerol-phosphate dehydratase of Paraburkholderia phymatum (strain DSM 17167 / CIP 108236 / LMG 21445 / STM815) (Burkholderia phymatum).